Consider the following 183-residue polypeptide: Adenine phosphoribosyltransferase (183 aa).

Belongs to the purine/pyrimidine phosphoribosyltransferase family. As to quaternary structure, homodimer.

The protein resides in the cytoplasm. It carries out the reaction AMP + diphosphate = 5-phospho-alpha-D-ribose 1-diphosphate + adenine. It participates in purine metabolism; AMP biosynthesis via salvage pathway; AMP from adenine: step 1/1. Catalyzes a salvage reaction resulting in the formation of AMP, that is energically less costly than de novo synthesis. This is Adenine phosphoribosyltransferase from Shigella flexneri serotype 5b (strain 8401).